The sequence spans 462 residues: ATP synthase subunit beta (462 aa).

Position 151-158 (151-158 (GGAGVGKT)) interacts with ATP.

Belongs to the ATPase alpha/beta chains family. F-type ATPases have 2 components, CF(1) - the catalytic core - and CF(0) - the membrane proton channel. CF(1) has five subunits: alpha(3), beta(3), gamma(1), delta(1), epsilon(1). CF(0) has four main subunits: a(1), b(1), b'(1) and c(9-12).

It localises to the cell inner membrane. It carries out the reaction ATP + H2O + 4 H(+)(in) = ADP + phosphate + 5 H(+)(out). Produces ATP from ADP in the presence of a proton gradient across the membrane. The catalytic sites are hosted primarily by the beta subunits. This is ATP synthase subunit beta from Chlorobium phaeobacteroides (strain BS1).